Consider the following 467-residue polypeptide: 2-succinylbenzoate--CoA ligase (467 aa).

This sequence belongs to the ATP-dependent AMP-binding enzyme family. MenE subfamily.

It carries out the reaction 2-succinylbenzoate + ATP + CoA = 2-succinylbenzoyl-CoA + AMP + diphosphate. The protein operates within quinol/quinone metabolism; 1,4-dihydroxy-2-naphthoate biosynthesis; 1,4-dihydroxy-2-naphthoate from chorismate: step 5/7. It functions in the pathway quinol/quinone metabolism; menaquinone biosynthesis. Converts 2-succinylbenzoate (OSB) to 2-succinylbenzoyl-CoA (OSB-CoA). This Listeria monocytogenes serovar 1/2a (strain ATCC BAA-679 / EGD-e) protein is 2-succinylbenzoate--CoA ligase.